A 365-amino-acid polypeptide reads, in one-letter code: Membrane-bound lytic murein transglycosylase A (365 aa).

An N-terminal signal peptide occupies residues 1 to 20; sequence MKGRWVKYLLMGTVVAMLAA. A lipid anchor (N-palmitoyl cysteine) is attached at Cys21. Cys21 carries the S-diacylglycerol cysteine lipid modification.

It localises to the cell outer membrane. The enzyme catalyses Exolytic cleavage of the (1-&gt;4)-beta-glycosidic linkage between N-acetylmuramic acid (MurNAc) and N-acetylglucosamine (GlcNAc) residues in peptidoglycan, from either the reducing or the non-reducing ends of the peptidoglycan chains, with concomitant formation of a 1,6-anhydrobond in the MurNAc residue.. Murein-degrading enzyme. May play a role in recycling of muropeptides during cell elongation and/or cell division. Degrades murein glycan strands and insoluble, high-molecular weight murein sacculi. The protein is Membrane-bound lytic murein transglycosylase A (mltA) of Escherichia coli O157:H7.